The primary structure comprises 38 residues: Non-specific lipid-transfer protein P2 (38 aa).

This sequence belongs to the plant LTP family.

It is found in the secreted. Its function is as follows. Plant non-specific lipid-transfer proteins transfer phospholipids as well as galactolipids across membranes. May play a role in wax or cutin deposition in the cell walls of expanding epidermal cells and certain secretory tissues. This is Non-specific lipid-transfer protein P2 from Vitis sp. (Grape).